Consider the following 469-residue polypeptide: MRFKQPSRRDRPVMFKRSKNVSVDVGVDSISDLPDAVLQHIFSYIPTELAIRTSVLSKRWRHVWSETPHLSFEWLKVSPKLINKTLASYTASKIKSFHLCTRYSYEADTHHVNSSIEFAMSHNVDDLSLAFRRCSPFYNFDDCFYTNSSLKRVELRYVDLMPRCMVSWTSLKNLSLTDCTMSDESFLEILSGCPILESLSLKFCMSLKYLNLSKSLRLTRLEIERISYIRAPMLSMQIVAPYIHYLRLRDSEAHCTFVDVSSLTEANVDVSTFHPRTCYHDFDPLDPHDLLVMVQTMLKTFQKVEKLTLGVNLLQMLSLSKIPSLPLPMLKVKTLTLETMIIRSVVPGIARLLQNLPGLKKITVYTTNPCNTEVEPCVNSYLDAQDLNPDQWWRLDDVVFPISSEYEVLKPEIMASFMELLLANTRTLETLVVELGSCVARSRFKELFQIALTLSHDKKVSIMLKRSNG.

The region spanning 27–77 (VDSISDLPDAVLQHIFSYIPTELAIRTSVLSKRWRHVWSETPHLSFEWLKV) is the F-box domain. LRR repeat units follow at residues 30–58 (ISDL…VLSK), 178–203 (DCTM…SLKF), 204–214 (CMSLKYLNLSK), 223–250 (IERI…RLRD), 296–321 (TMLK…SLSK), and 341–366 (IIRS…TVYT).

In Arabidopsis thaliana (Mouse-ear cress), this protein is Putative F-box/LRR-repeat protein At5g02930.